The primary structure comprises 153 residues: Histone H2B.3 (153 aa).

2 stretches are compositionally biased toward basic and acidic residues: residues Met-1–Leu-28 and Glu-36–Lys-53. The disordered stretch occupies residues Met-1–Lys-61. 2 positions are modified to N6-acetyllysine: Lys-7 and Lys-37. Residue Lys-149 forms a Glycyl lysine isopeptide (Lys-Gly) (interchain with G-Cter in ubiquitin) linkage.

The protein belongs to the histone H2B family. As to quaternary structure, the nucleosome is a histone octamer containing two molecules each of H2A, H2B, H3 and H4 assembled in one H3-H4 heterotetramer and two H2A-H2B heterodimers. The octamer wraps approximately 147 bp of DNA. In terms of processing, can be acetylated to form H2BK6ac and H2BK33ac. Post-translationally, monoubiquitinated by BRE1 to form H2BK143ub1 and deubiquitinated by UBP26. Required for heterochromatic histone H3 di- and trimethylation at H3K4me. May give a specific tag for epigenetic transcriptional activation.

The protein localises to the nucleus. The protein resides in the chromosome. Core component of nucleosome. Nucleosomes wrap and compact DNA into chromatin, limiting DNA accessibility to the cellular machineries which require DNA as a template. Histones thereby play a central role in transcription regulation, DNA repair, DNA replication and chromosomal stability. DNA accessibility is regulated via a complex set of post-translational modifications of histones, also called histone code, and nucleosome remodeling. In Oryza sativa subsp. indica (Rice), this protein is Histone H2B.3 (H2B.3).